Here is a 135-residue protein sequence, read N- to C-terminus: ATP synthase epsilon chain (135 aa).

The protein belongs to the ATPase epsilon chain family. F-type ATPases have 2 components, CF(1) - the catalytic core - and CF(0) - the membrane proton channel. CF(1) has five subunits: alpha(3), beta(3), gamma(1), delta(1), epsilon(1). CF(0) has three main subunits: a, b and c.

The protein resides in the cellular thylakoid membrane. In terms of biological role, produces ATP from ADP in the presence of a proton gradient across the membrane. The protein is ATP synthase epsilon chain of Prochlorococcus marinus (strain NATL1A).